Reading from the N-terminus, the 899-residue chain is MLSTLIRKVIGSKNERELKRLWPIVAKINSLEPQMQALSDEELRGKTAEFKERYSKGESLDALLPEAFAVCREGGRRELGMRHFDVQLIGGMTLHAGKIAEMKTGEGKTLVATLAAYLNAISGKGVHVVTVNDYLARRDSEWMGRLYGFLGLTTGVIVHGLDDEQRRANYAADITYGTNNEFGFDYLRDNMKFSLDDYVQRGFNFAVVDEVDSILIDEARTPLIISGPTEESTDKYYVINQIIPRLEQGEVKEVEANTLSGKKKVYTGDFTIDEKAKSATLTEQGVSKVEKLLKIENLYDPRNIETLHHVNQALRAHAMYRRDVDYVVKDGEVLIVDEFTGRLMPGRRWSDGLHQAVEAKEGVRIESENQTLATITFQNYFRMYAKLSGMTGTADTEAEEFHKIYKLDVTVIPTNRPLLRPDYPDVIYKTEQEKFAAVISDIKEHYEKGQPCLVGTISIEKSEVLSELLRKQGIPHFVLNAKQHEKEAEIVAQAGRKKAITIATNMAGRGTDIVLGGNPDSLLKQWRLANPEATAEQAAAMLEQYRQQCAAEHDEVVALGGLHIIGTERHESRRIDNQLRGRSGRQGDPGSSRFYLSLQDDLLRIFGSERVAKIMDFLKIEEGEAITHAMINKSIENAQKKVEAHNFEIRKHLIDYDDVMNKQREVIYTQRREILAGEDIRESFLEMLDDTISDIVKAYAFEKDAPLEWDWESLSETVFRCFSIQLELSREMIARLNADGLQKMLQEQAHESIKRRADELGDELMDHLIRVVMLQAIDVHWKDHLLNIDHLKEGIGLRSYGQKDPKQEYKKEAYQLFMEMIIRIREETVEKVFWVQIEKEEDIEELEEEQVERSRKMFKAITVNDDEHPAEPAKSQKNAGRNEPCPCGSGKKYKKCCGK.

ATP contacts are provided by residues Gln87, Gly105–Thr109, and Asp512. 2 disordered regions span residues Arg573 to Ser592 and Ile861 to Lys899. Zn(2+)-binding residues include Cys885, Cys887, Cys896, and Cys897.

The protein belongs to the SecA family. Monomer and homodimer. Part of the essential Sec protein translocation apparatus which comprises SecA, SecYEG and auxiliary proteins SecDF-YajC and YidC. Zn(2+) is required as a cofactor.

The protein resides in the cell inner membrane. It localises to the cytoplasm. It catalyses the reaction ATP + H2O + cellular proteinSide 1 = ADP + phosphate + cellular proteinSide 2.. Its function is as follows. Part of the Sec protein translocase complex. Interacts with the SecYEG preprotein conducting channel. Has a central role in coupling the hydrolysis of ATP to the transfer of proteins into and across the cell membrane, serving as an ATP-driven molecular motor driving the stepwise translocation of polypeptide chains across the membrane. This is Protein translocase subunit SecA from Trichlorobacter lovleyi (strain ATCC BAA-1151 / DSM 17278 / SZ) (Geobacter lovleyi).